The chain runs to 862 residues: Cell surface glycoprotein (862 aa).

An N-terminal signal peptide occupies residues 1–34 (MTDTQQKIKAVLLTVLMVTSVFAATIAFSGAAAA). Disordered regions lie at residues 35-60 (SERG…SAGN), 101-126 (ILLE…EGTE), and 200-220 (VNTN…DRDD). Positions 43 to 57 (YTTGPTDGNQDNVDS) are enriched in polar residues. Over residues 206 to 220 (NDDHPNPAADGDRDD) the composition is skewed to basic and acidic residues. 5 N-linked (GlcNAc...) asparagine glycosylation sites follow: N442, N520, N550, N702, and N761. The disordered stretch occupies residues 752 to 838 (LSDENVEPGN…TEEATTEATG (87 aa)). Residues 784–801 (SLEEEQPATDTPEPDTDT) show a composition bias toward acidic residues. A compositionally biased stretch (low complexity) spans 802 to 815 (PEPATDTPEPATDT). Acidic residues predominate over residues 816 to 833 (PEPDTDTPEPDTETEEAT). A helical membrane pass occupies residues 838–858 (GPGFTAAIALIALVAAALLAV). The PGF sorting signal signature appears at 839-841 (PGF).

The protein belongs to the halobacterial S-layer protein family. Glycosylated. Post-translationally, cleaved by the archaeosortase ArtA at the C-terminus, with removal of a short hydrophobic segment. In terms of processing, lipidation.

It is found in the secreted. Its subcellular location is the cell wall. It localises to the S-layer. The protein resides in the cell membrane. In terms of biological role, S-layer protein. The S-layer is a paracrystalline mono-layered assembly of proteins which coat the surface of the cell. The sequence is that of Cell surface glycoprotein from Haloarcula japonica (strain ATCC 49778 / DSM 6131 / JCM 7785 / NBRC 101032 / NCIMB 13157 / TR-1).